We begin with the raw amino-acid sequence, 337 residues long: 3-isopropylmalate dehydrogenase (337 aa).

Substrate is bound by residues Arg88, Arg98, Arg122, and Asp212. Asp212, Asp236, and Asp240 together coordinate Mg(2+). An NAD(+)-binding site is contributed by Gly272–Asp284.

The protein belongs to the isocitrate and isopropylmalate dehydrogenases family. LeuB type 2 subfamily. Homodimer. It depends on Mg(2+) as a cofactor. The cofactor is Mn(2+).

The protein resides in the cytoplasm. It carries out the reaction (2R,3S)-3-isopropylmalate + NAD(+) = 4-methyl-2-oxopentanoate + CO2 + NADH. Its pathway is amino-acid biosynthesis; L-leucine biosynthesis; L-leucine from 3-methyl-2-oxobutanoate: step 3/4. Its function is as follows. Catalyzes the oxidation of 3-carboxy-2-hydroxy-4-methylpentanoate (3-isopropylmalate) to 3-carboxy-4-methyl-2-oxopentanoate. The product decarboxylates to 4-methyl-2 oxopentanoate. This is 3-isopropylmalate dehydrogenase from Rhodococcus erythropolis (strain PR4 / NBRC 100887).